Reading from the N-terminus, the 519-residue chain is MEWKLQRTARRKIRTEEEMLWENIMRVLANGMKQQRNQGSPKELDSVAVTYSSFKSNFVKRLSAEIPVASSPITTRWQLSPARDPESSSSVEEGPPSHTPESLASGLKITPAADTLTLRSHNKNSPKTLSKGSSEVNNSTLRFCKTPLAGDRGWKENLATKGQRCLNQPFSTQKGAQQIDGKMHLCEESRCVRTGCRFGARDEFYLRRFSGVYHSTCQPEVKIHLTGLRNDYYLNTLDWSSQNLVAVALGTSVYIWNGQNHSWIENIDLSVCCHYVSSVTWMREGSCLAVGTSEGEVQLWDAITKKQLRNLHGHLSVVGALSWNHCTLSSGSRLGRVHHHDVRVAQHRVGTLYHKEAVCSLKWSPDGRLLSSGCNDGLLTIWPHDPGAGVQGLPLKVIPQSTAVKAMEWCPWQSEVLAVGGGVKDGCLHVLDINTGKNIQTPSTQSQICSLIWLPKTKEIATGQGAPKNDVALWTCPTLFRSGGFFGHRDRVLHLSLSPDQTRLFSAAADGTACVWKCC.

A disordered region spans residues 77–106; it reads WQLSPARDPESSSSVEEGPPSHTPESLASG. The segment covering 87-96 has biased composition (low complexity); sequence SSSSVEEGPP. 6 WD repeats span residues 229 to 266, 271 to 310, 353 to 392, 399 to 441, 443 to 484, and 487 to 519; these read RNDY…WIEN, VCCH…QLRN, YHKE…GVQG, PQST…NIQT, STQS…RSGG, and GHRD…WKCC.

The protein belongs to the WD repeat CDC20/Fizzy family. As to expression, expressed in multiciliated cells (MCCs).

It is found in the cytoplasm. Functionally, protein regulator of centriole-deuterosome disengagement and subsequently participates in the ciliogenesis in multiciliated cells (MCCs). The sequence is that of Cell division cycle protein 20 homolog B from Mus musculus (Mouse).